The chain runs to 255 residues: uncharacterized protein (255 aa).

Residues 42–67 (ACSGSPPEPGKGRPDTTPEQEVPVTA) are disordered.

This is an uncharacterized protein from Mycobacterium tuberculosis (strain CDC 1551 / Oshkosh).